The sequence spans 347 residues: NADH-ubiquinone oxidoreductase chain 2 (347 aa).

10 helical membrane passes run M1–M21, H25–M45, Y59–M79, I96–P116, I148–G168, I178–P198, L200–I220, M237–L257, N274–M294, and L326–L346.

This sequence belongs to the complex I subunit 2 family. As to quaternary structure, core subunit of respiratory chain NADH dehydrogenase (Complex I) which is composed of 45 different subunits. Interacts with TMEM242.

It localises to the mitochondrion inner membrane. It catalyses the reaction a ubiquinone + NADH + 5 H(+)(in) = a ubiquinol + NAD(+) + 4 H(+)(out). Functionally, core subunit of the mitochondrial membrane respiratory chain NADH dehydrogenase (Complex I) which catalyzes electron transfer from NADH through the respiratory chain, using ubiquinone as an electron acceptor. Essential for the catalytic activity and assembly of complex I. This is NADH-ubiquinone oxidoreductase chain 2 from Gardnerycteris crenulata (Striped hairy-nosed bat).